The following is a 350-amino-acid chain: Ion-translocating oxidoreductase complex subunit D (350 aa).

Helical transmembrane passes span 25–45, 89–109, and 129–149; these read ILCALPGVAVQCFFFGWGTVI, IPPLAPWWVTVIGTLFAIVIV, and VMLLISFPVQMTSWVAPSVIA. Threonine 185 is subject to FMN phosphoryl threonine. 5 helical membrane-spanning segments follow: residues 212 to 232, 239 to 259, 264 to 284, 298 to 318, and 319 to 339; these read GFGVGWFWVNLAYLAGGLVML, WHITAGILAALFICSGVGYLL, FTGPLLHLFSGATMLAAFFIA, LVFGALIGILVYIIRTFGGYP, and DAFAFAILLANLCAPFIDHYM.

Belongs to the NqrB/RnfD family. As to quaternary structure, the complex is composed of six subunits: RnfA, RnfB, RnfC, RnfD, RnfE and RnfG. The cofactor is FMN.

Its subcellular location is the cell inner membrane. In terms of biological role, part of a membrane-bound complex that couples electron transfer with translocation of ions across the membrane. The chain is Ion-translocating oxidoreductase complex subunit D from Shewanella sediminis (strain HAW-EB3).